Consider the following 336-residue polypeptide: MSPAIDIAIVGATGTVGAAIVEILEERDFPVGQLHLLASPASAGKSVSFKGRNLRVKSIEAFDFAQVRLVFFAAGQAVTRQYASQARAAGCMLVDLSGALPLQQAPRVVAEVNPQVLEKLEAPCQVTSPASQVVALALALAPLRPLVRWRHLGVTACLPVSSLGREGVAELARQTTELLNGRPPKPRFFDRQIAFNLLGRVGDSDTAGHTGLERRLVEESRQVLDAPELKISVTCLMAPVFFGDSLSLAVQASQAIDPSAVRAALERAPGLELIEPDDCPTVIGDAVGQDVAYVGRVRTGVDDACELDLWIASDNVRKGSALNAVQLAELLIKQGR.

This sequence belongs to the aspartate-semialdehyde dehydrogenase family.

The sequence is that of USG-1 protein homolog (usg) from Azotobacter vinelandii.